The chain runs to 316 residues: Acetaldehyde dehydrogenase (316 aa).

13-16 contacts NAD(+); it reads SGNI. The Acyl-thioester intermediate role is filled by C131. Residues 162-170 and N290 each bind NAD(+); that span reads SAGPGTRAN.

Belongs to the acetaldehyde dehydrogenase family.

It carries out the reaction acetaldehyde + NAD(+) + CoA = acetyl-CoA + NADH + H(+). Functionally, catalyzes the conversion of acetaldehyde to acetyl-CoA, using NAD(+) and coenzyme A. Is the final enzyme in the meta-cleavage pathway for the degradation of 2-aminophenol. The protein is Acetaldehyde dehydrogenase (amnH) of Pseudomonas sp.